Consider the following 489-residue polypeptide: 3-octaprenyl-4-hydroxybenzoate carboxy-lyase (489 aa).

Position 172 (Asn172) interacts with Mn(2+). Prenylated FMN contacts are provided by residues 175 to 177 (IYR), 189 to 191 (RWL), and 194 to 195 (RG). Glu238 is a Mn(2+) binding site. Asp287 (proton donor) is an active-site residue.

This sequence belongs to the UbiD family. In terms of assembly, homohexamer. Prenylated FMN serves as cofactor. Mn(2+) is required as a cofactor.

It localises to the cell membrane. It catalyses the reaction a 4-hydroxy-3-(all-trans-polyprenyl)benzoate + H(+) = a 2-(all-trans-polyprenyl)phenol + CO2. The protein operates within cofactor biosynthesis; ubiquinone biosynthesis. Catalyzes the decarboxylation of 3-octaprenyl-4-hydroxy benzoate to 2-octaprenylphenol, an intermediate step in ubiquinone biosynthesis. This Psychromonas ingrahamii (strain DSM 17664 / CCUG 51855 / 37) protein is 3-octaprenyl-4-hydroxybenzoate carboxy-lyase.